We begin with the raw amino-acid sequence, 852 residues long: MTERIPLFEEDKDYIDEDHISEFAKALVWQDDYDYDANTTATTDITTTPINDEVPGIVSSLPSTNGNNKNKNKDINGTVSDSSSITDEDIMNSSYFDKPHSSTNLKSNSTKNDDDDDDDDDDLISRPQSGTTDNTSTTSLSSKRPDLITSKSDWFPIGGSRSSSSSKKGSSNYHKKTTPTSSTSTKSTIEILKNEFRNSSTYTLLRWPILIFVFSWIGILGIFYFMIRIYVAVSEYLFTWRGERKRLRNKLRNSKTYEEWINNALELDKFLKLDKWSENPKFSYYDYKTIKLTILKLQKLRHQGKLIELMVILQGCLKKNFAGIENRQLYSHRYYGTKNLVEEYYQEVVKCLELINQDNNNGDDNDDDDNDNEKIDIEKKWKFFKIVSKNYGKSALCLSGGACFAYTHFGIAKALLDQNLLPQIISGTSGGGLIAALLCTRTNEELKKLLVPQLARKITACEDPWYIWIPRFLKTGARFDAIDWARKSNFFTHGSTTFEEAFQRTGRKLNISTIPADPHSPVILCNDITSPHCIIWSTLLASSAVPGILNPVVLMMKNPINGKVIPFSLGSKWRDGSLRTDIPIEALNTYYNVNFTIVSQVNPHISLFFFAPKGTVGRPVTSSTRKTRSKQQYASFRGGFIATALEQLLRLEIKKWLQIIKSLDLLPHFLQQDWSNIWLQNFTGTITIWPKNKLSDFWYILSDPTEFRMKEIIEKGEKCMFPRLLFIKHRASIENVIEKGKKLTLTKYKQLKSGGVDCDEDVDVDVDIDDEEEEGESGGVVSDYDAQSFQKVVGWSNEDKKLLDELDNEDEEEDEEEEEVDVDDDDDDDDDSLSDSFEITTEHLKQRRNTIF.

Positions 41 to 52 are enriched in low complexity; sequence ATTDITTTPIND. The tract at residues 41-184 is disordered; the sequence is ATTDITTTPI…KKTTPTSSTS (144 aa). Residues 75-95 show a composition bias toward polar residues; it reads INGTVSDSSSITDEDIMNSSY. Over residues 101–110 the composition is skewed to low complexity; the sequence is SSTNLKSNST. Acidic residues predominate over residues 113–122; sequence DDDDDDDDDD. Composition is skewed to low complexity over residues 129–142 and 158–171; these read SGTT…SLSS and GGSR…KGSS. The chain crosses the membrane as a helical span at residues 207–227; the sequence is WPILIFVFSWIGILGIFYFMI. The PNPLA domain maps to 396 to 588; sequence LCLSGGACFA…RTDIPIEALN (193 aa). The short motif at 427-431 is the GXSXG element; that stretch reads GTSGG. Ser429 (nucleophile) is an active-site residue. The active-site Proton acceptor is the Asp575. The tract at residues 800–840 is disordered; that stretch reads KKLLDELDNEDEEEDEEEEEVDVDDDDDDDDDSLSDSFEIT. A compositionally biased stretch (acidic residues) spans 805–833; it reads ELDNEDEEEDEEEEEVDVDDDDDDDDDSL.

The protein belongs to the PLPL family.

It is found in the membrane. Functionally, probable lipid hydrolase. This chain is Patatin-like phospholipase domain-containing protein CaO19.1504, found in Candida albicans (strain SC5314 / ATCC MYA-2876) (Yeast).